The chain runs to 215 residues: Probable phosphoglycerate mutase GpmB (215 aa).

Substrate contacts are provided by residues Arg-8 to Asn-15, Gln-21 to Gly-22, Arg-58, Arg-60, Glu-82 to Met-85, Arg-104 to Arg-105, and Gly-151 to Ile-152. The active-site Tele-phosphohistidine intermediate is the His-9. The active-site Proton donor/acceptor is the Glu-82.

The protein belongs to the phosphoglycerate mutase family. GpmB subfamily.

It carries out the reaction (2R)-2-phosphoglycerate = (2R)-3-phosphoglycerate. It functions in the pathway carbohydrate degradation; glycolysis; pyruvate from D-glyceraldehyde 3-phosphate: step 3/5. This chain is Probable phosphoglycerate mutase GpmB, found in Klebsiella pneumoniae subsp. pneumoniae (strain ATCC 700721 / MGH 78578).